A 309-amino-acid polypeptide reads, in one-letter code: NADH-cytochrome b5 reductase 1 (309 aa).

A helical membrane pass occupies residues 30–50; that stretch reads FVPYAVAVTAILAGLKLFTGG. The region spanning 60-165 is the FAD-binding FR-type domain; that stretch reads TEFQEFVLKE…RGPKGAMVYT (106 aa). FAD-binding positions include 145-160 and 171-208; these read TTLKIGDTMKVRGPKG and HIGMIAGGTGITPMLQIIKAVIRNRPRNGGNDTTKLDL.

It belongs to the flavoprotein pyridine nucleotide cytochrome reductase family. In terms of assembly, monomer. Component of the 2-(3-amino-3-carboxypropyl)histidine synthase complex composed of dph1, dph2, dph3 and a NADH-dependent reductase, predominantly cbr1. The cofactor is FAD.

It localises to the mitochondrion outer membrane. The catalysed reaction is 2 Fe(III)-[cytochrome b5] + NADH = 2 Fe(II)-[cytochrome b5] + NAD(+) + H(+). The enzyme catalyses 2 Fe(3+)-[Dph3] + NADH = 2 Fe(2+)-[Dph3] + NAD(+) + H(+). The protein operates within protein modification; peptidyl-diphthamide biosynthesis. NADH-dependent reductase for dph3 and cytochrome b5. Required for the first step of diphthamide biosynthesis, a post-translational modification of histidine which occurs in elongation factor 2. Dph1 and dph2 transfer a 3-amino-3-carboxypropyl (ACP) group from S-adenosyl-L-methionine (SAM) to a histidine residue, the reaction is assisted by a reduction system comprising dph3 and a NADH-dependent reductase, predominantly cbr1. By reducing dph3, also involved in the formation of the tRNA wobble base modification mcm5s 2U (5-methoxycarbonylmethyl-2-thiouridine), mediated by the elongator complex. The cytochrome b5/NADH cytochrome b5 reductase electron transfer system supports the catalytic activity of several sterol biosynthetic enzymes. The chain is NADH-cytochrome b5 reductase 1 (cbr1) from Aspergillus fumigatus (strain ATCC MYA-4609 / CBS 101355 / FGSC A1100 / Af293) (Neosartorya fumigata).